A 230-amino-acid polypeptide reads, in one-letter code: Urease accessory protein UreF (230 aa).

It belongs to the UreF family. UreD, UreF and UreG form a complex that acts as a GTP-hydrolysis-dependent molecular chaperone, activating the urease apoprotein by helping to assemble the nickel containing metallocenter of UreC. The UreE protein probably delivers the nickel.

The protein resides in the cytoplasm. Its function is as follows. Required for maturation of urease via the functional incorporation of the urease nickel metallocenter. The chain is Urease accessory protein UreF from Cupriavidus taiwanensis (strain DSM 17343 / BCRC 17206 / CCUG 44338 / CIP 107171 / LMG 19424 / R1) (Ralstonia taiwanensis (strain LMG 19424)).